The chain runs to 867 residues: MDCVTSHNPVATFRCEVKMKPGKILFLLLLTGSVWSLISHPGKTQEAPSPTQLNTQSPAPNAQELTQVTGVRVVPTVQGLEVILDSTAAEKLQVSTQNQGNSLIADITNAQLNLSEGNTFSQNNPATGVTNVTVVNHNDNTIRVTVTGEKSLPKFELFDSDTGLILAFTATEVAQDSPAEVDEPIELVVTATRTETPIQNVPRSITVIDREQIAAQASTSRNLIEILGKTVPGLAPPAQGASNFGLTLRGRNPQVLIDGVPQSTTRNASRDLRTIDAAAIERIEVVRGPSAIYGDGATGGVINIITRRPTEEKLTSRTEVGVSAALGNLEGDSFSTNLQHFISAKQGNFDFTFNFAVAKNGGFFDAQGDRIPSDPNAQGGFADASSINLFGKFGIDIDANQRLQLTFNRFDEKQDTDIASDPRVNTIPGRQKARALEGLSLDERPGNENTFINLQYTHDDLFNSKLQAQLYYRDYLTRFFPFDGRSFASLGNEIFQSRVESEKYGGRLQIETPLFNQGAAKLLWGVDYSQEDTSQPVSVFDQAAFVASGGLAFRKTGDRSWTPPLELRSLGLFAQLNWEISDRFVFNGGVRYENADVSVNDFRTLANPNVTIGGGDLNFNATLFNVGAVYALNPQLSVFANYAQGFSLSDIGLALRNAPPGFSVESLNPEPQKVDNYEIGIRGQWDTVQASLSAFYNESDLGTTFTAPGTVIRAPERIYGLEAAIDAQPSSTWQVGGTFTLIGGEIDSNNDGDYESLDGFRIPPLKLTAYVENETLPGWRNRLQALYSGNREVFGNNNTAFGRRPVESYLTVDYISSIKLGAGTLQLGLENLFNSQYFPVVSQLQANDSAYAAARGRTLSIKYSFDW.

The tract at residues 40–62 (HPGKTQEAPSPTQLNTQSPAPNA) is disordered. Residues 46–62 (EAPSPTQLNTQSPAPNA) are compositionally biased toward polar residues. A TonB box motif is present at residues 185 to 192 (IELVVTAT). One can recognise a TBDR plug domain in the interval 197 to 307 (PIQNVPRSIT…TGGVINIITR (111 aa)). One can recognise a TBDR beta-barrel domain in the interval 313 to 867 (KLTSRTEVGV…TLSIKYSFDW (555 aa)). Positions 850-867 (AYAAARGRTLSIKYSFDW) match the TonB C-terminal box motif.

The protein belongs to the TonB-dependent receptor family.

The protein resides in the cell outer membrane. Functionally, involved in the TonB-dependent uptake of iron in complex with schizokinen, a dihydroxamate-type siderophore. This Nostoc sp. (strain PCC 7120 / SAG 25.82 / UTEX 2576) protein is Schizokinen transporter SchT.